The following is an 81-amino-acid chain: Photosystem I iron-sulfur center (81 aa).

4Fe-4S ferredoxin-type domains are found at residues Ala2–Trp31 and Ile39–Tyr68. Positions 11, 14, 17, 21, 48, 51, 54, and 58 each coordinate [4Fe-4S] cluster.

In terms of assembly, the eukaryotic PSI reaction center is composed of at least 11 subunits. It depends on [4Fe-4S] cluster as a cofactor.

It is found in the plastid. It localises to the chloroplast thylakoid membrane. It carries out the reaction reduced [plastocyanin] + hnu + oxidized [2Fe-2S]-[ferredoxin] = oxidized [plastocyanin] + reduced [2Fe-2S]-[ferredoxin]. Its function is as follows. Apoprotein for the two 4Fe-4S centers FA and FB of photosystem I (PSI); essential for photochemical activity. FB is the terminal electron acceptor of PSI, donating electrons to ferredoxin. The C-terminus interacts with PsaA/B/D and helps assemble the protein into the PSI complex. Required for binding of PsaD and PsaE to PSI. PSI is a plastocyanin-ferredoxin oxidoreductase, converting photonic excitation into a charge separation, which transfers an electron from the donor P700 chlorophyll pair to the spectroscopically characterized acceptors A0, A1, FX, FA and FB in turn. This is Photosystem I iron-sulfur center from Staurastrum punctulatum (Green alga).